A 264-amino-acid chain; its full sequence is PDZ domain-containing protein 9 (264 aa).

Residues 22-109 (VHNLSKTQQT…GTVLQIKVYR (88 aa)) enclose the PDZ domain.

The chain is PDZ domain-containing protein 9 (PDZD9) from Macaca fascicularis (Crab-eating macaque).